The primary structure comprises 99 residues: Small ribosomal subunit protein bS20 (99 aa).

Belongs to the bacterial ribosomal protein bS20 family.

In terms of biological role, binds directly to 16S ribosomal RNA. In Cyanothece sp. (strain PCC 7425 / ATCC 29141), this protein is Small ribosomal subunit protein bS20.